Reading from the N-terminus, the 193-residue chain is Ion-translocating oxidoreductase complex subunit A (193 aa).

6 helical membrane passes run 5–25, 47–67, 72–92, 102–122, 134–154, and 171–191; these read LLLF…FLGL, FVMT…LIPL, LRTL…EMVV, LLGI…VALL, ALYG…FAAI, and AIAL…SGLV.

Belongs to the NqrDE/RnfAE family. In terms of assembly, the complex is composed of six subunits: RsxA, RsxB, RsxC, RsxD, RsxE and RsxG.

Its subcellular location is the cell inner membrane. In terms of biological role, part of a membrane-bound complex that couples electron transfer with translocation of ions across the membrane. Required to maintain the reduced state of SoxR. The chain is Ion-translocating oxidoreductase complex subunit A from Salmonella arizonae (strain ATCC BAA-731 / CDC346-86 / RSK2980).